We begin with the raw amino-acid sequence, 168 residues long: uncharacterized protein (168 aa).

2 4Fe-4S ferredoxin-type domains span residues 48–78 and 91–122; these read KIPK…MIPI and KIPK…ISPI. The [4Fe-4S] cluster site is built by C58, C61, C64, C68, C100, C103, C106, and C110.

This is an uncharacterized protein from Methanocaldococcus jannaschii (strain ATCC 43067 / DSM 2661 / JAL-1 / JCM 10045 / NBRC 100440) (Methanococcus jannaschii).